Reading from the N-terminus, the 339-residue chain is MamK-like protein (339 aa).

ATP is bound by residues 18–19 (YS), D74, 162–164 (AWT), and 216–220 (KEQFA).

This sequence belongs to the FtsA/MreB family. MamK subfamily. In terms of assembly, forms cytoplasmic filament polymers. Forms filaments with MamK.

The protein resides in the cytoplasm. The protein localises to the cytoskeleton. The enzyme catalyses ATP + H2O = ADP + phosphate + H(+). Its function is as follows. Protein with ATPase activity which forms pole-to-pole filaments in vivo, probably with MamK. Efficient filament formation requires MamK. Probably promotes turnover of MamK filaments, by providing a monomer pool. In vivo, in the absence of its paralog MamK, forms thin filaments from pole to pole. In vitro forms straight filaments and bundles in the absence of ATP. Filament formation is triggered by KCl and MgCl(2); polymerizes more slowly and makes thinner filaments than MamK. Expression in E.coli yields a filament in the cell's longitudinal axis; the protein nucleates at one pole or the cell septum. This is MamK-like protein from Paramagnetospirillum magneticum (strain ATCC 700264 / AMB-1) (Magnetospirillum magneticum).